A 233-amino-acid chain; its full sequence is Orotidine 5'-phosphate decarboxylase (233 aa).

Substrate contacts are provided by residues Asp11, Lys34, 61–70 (DLKLHDIPNT), Thr117, Arg179, Gln189, Gly209, and Arg210. The Proton donor role is filled by Lys63.

Belongs to the OMP decarboxylase family. Type 1 subfamily. As to quaternary structure, homodimer.

It catalyses the reaction orotidine 5'-phosphate + H(+) = UMP + CO2. It functions in the pathway pyrimidine metabolism; UMP biosynthesis via de novo pathway; UMP from orotate: step 2/2. Catalyzes the decarboxylation of orotidine 5'-monophosphate (OMP) to uridine 5'-monophosphate (UMP). This is Orotidine 5'-phosphate decarboxylase from Streptococcus agalactiae serotype III (strain NEM316).